Consider the following 149-residue polypeptide: Putative pre-16S rRNA nuclease (149 aa).

This sequence belongs to the YqgF nuclease family.

Its subcellular location is the cytoplasm. Its function is as follows. Could be a nuclease involved in processing of the 5'-end of pre-16S rRNA. The sequence is that of Putative pre-16S rRNA nuclease from Burkholderia ambifaria (strain MC40-6).